The sequence spans 376 residues: Ribosomal RNA large subunit methyltransferase G (376 aa).

It belongs to the methyltransferase superfamily. RlmG family.

Its subcellular location is the cytoplasm. The enzyme catalyses guanosine(1835) in 23S rRNA + S-adenosyl-L-methionine = N(2)-methylguanosine(1835) in 23S rRNA + S-adenosyl-L-homocysteine + H(+). Its function is as follows. Specifically methylates the guanine in position 1835 (m2G1835) of 23S rRNA. In Klebsiella pneumoniae (strain 342), this protein is Ribosomal RNA large subunit methyltransferase G.